A 284-amino-acid polypeptide reads, in one-letter code: Diaminopimelate epimerase (284 aa).

Residues asparagine 20, glutamine 53, and asparagine 73 each contribute to the substrate site. The active-site Proton donor is the cysteine 82. Substrate-binding positions include 83 to 84 (GN), asparagine 167, asparagine 200, and 218 to 219 (ER). Residue cysteine 227 is the Proton acceptor of the active site. 228 to 229 (GS) is a binding site for substrate.

This sequence belongs to the diaminopimelate epimerase family. In terms of assembly, homodimer.

It localises to the cytoplasm. It carries out the reaction (2S,6S)-2,6-diaminopimelate = meso-2,6-diaminopimelate. Its pathway is amino-acid biosynthesis; L-lysine biosynthesis via DAP pathway; DL-2,6-diaminopimelate from LL-2,6-diaminopimelate: step 1/1. Functionally, catalyzes the stereoinversion of LL-2,6-diaminopimelate (L,L-DAP) to meso-diaminopimelate (meso-DAP), a precursor of L-lysine and an essential component of the bacterial peptidoglycan. This Xylella fastidiosa (strain M23) protein is Diaminopimelate epimerase.